The sequence spans 215 residues: tRNA (guanine-N(7)-)-methyltransferase (215 aa).

Residues Asp-43, Glu-68, Asn-95, and Asp-121 each coordinate S-adenosyl-L-methionine. Residue Asp-121 is part of the active site. Substrate contacts are provided by Lys-125 and Asp-157.

It belongs to the class I-like SAM-binding methyltransferase superfamily. TrmB family.

The enzyme catalyses guanosine(46) in tRNA + S-adenosyl-L-methionine = N(7)-methylguanosine(46) in tRNA + S-adenosyl-L-homocysteine. It functions in the pathway tRNA modification; N(7)-methylguanine-tRNA biosynthesis. Functionally, catalyzes the formation of N(7)-methylguanine at position 46 (m7G46) in tRNA. The polypeptide is tRNA (guanine-N(7)-)-methyltransferase (Trichormus variabilis (strain ATCC 29413 / PCC 7937) (Anabaena variabilis)).